We begin with the raw amino-acid sequence, 208 residues long: Uridine kinase (208 aa).

Residue 11-18 (GGSGSGKT) participates in ATP binding.

This sequence belongs to the uridine kinase family.

The protein resides in the cytoplasm. It catalyses the reaction uridine + ATP = UMP + ADP + H(+). The enzyme catalyses cytidine + ATP = CMP + ADP + H(+). Its pathway is pyrimidine metabolism; CTP biosynthesis via salvage pathway; CTP from cytidine: step 1/3. It functions in the pathway pyrimidine metabolism; UMP biosynthesis via salvage pathway; UMP from uridine: step 1/1. This chain is Uridine kinase, found in Staphylococcus carnosus (strain TM300).